We begin with the raw amino-acid sequence, 1481 residues long: RNA helicase aquarius (1481 aa).

Residues 1–416 (MAAPAQPKKI…LVSRHERRIS (416 aa)) are helical region with structural similarity to ARM repeat domains. The tract at residues 417–1481 (QIQQLNQMPL…DAESVPTETE (1065 aa)) is required for assembly of the IB complex. A disordered region spans residues 754–773 (RSGKGKKRKDADGEEDDTEE). ATP is bound by residues Gln801, Gln806, and 826 to 831 (GTGKTD). Lys1055 carries the post-translational modification N6-acetyllysine. Positions 1396–1414 (EEGEEGQSQETEMEAEEET) are enriched in acidic residues. The segment at 1396–1481 (EEGEEGQSQE…DAESVPTETE (86 aa)) is disordered. Polar residues predominate over residues 1418–1448 (QGNLTPSPADASLSQETPAAQPDCSSQTEDT). A compositionally biased stretch (low complexity) spans 1455–1468 (ATAAEPVSAAAEAA).

This sequence belongs to the CWF11 family. As to quaternary structure, identified in the spliceosome C complex. Component of the XAB2 complex, a multimeric protein complex composed of XAB2, PRPF19, AQR, ZNF830, ISY1, and PPIE. Identified in a pentameric intron-binding (IB) complex composed of AQR, XAB2, ISY1, ZNF830 and PPIE that is incorporated into the spliceosome as a preassembled complex. The IB complex does not contain PRPF19. Within the spliceosome, interacts with SNRPA1, SF3B1, SF3B3, SF3A1 and SF3A2.

It localises to the nucleus. The protein localises to the nucleoplasm. The catalysed reaction is ATP + H2O = ADP + phosphate + H(+). Involved in pre-mRNA splicing as component of the spliceosome. Intron-binding spliceosomal protein required to link pre-mRNA splicing and snoRNP (small nucleolar ribonucleoprotein) biogenesis. Plays a key role in position-dependent assembly of intron-encoded box C/D small snoRNP, splicing being required for snoRNP assembly. May act by helping the folding of the snoRNA sequence. Binds to intron of pre-mRNAs in a sequence-independent manner, contacting the region between snoRNA and the branchpoint of introns (40 nucleotides upstream of the branchpoint) during the late stages of splicing. Has ATP-dependent RNA helicase activity and can unwind double-stranded RNA molecules with a 3' overhang (in vitro). This is RNA helicase aquarius (Aqr) from Mus musculus (Mouse).